The sequence spans 506 residues: Transcription factor CP2 (506 aa).

In terms of domain architecture, Grh/CP2 DB spans 61–300; it reads ENKILPFQYV…SPGFNSSHNS (240 aa). A DNA-binding region spans residues 133–395; it reads EHQQLEGWRW…LFNALKGRIV (263 aa). 2 disordered regions span residues 238-268 and 291-316; these read FKPK…YQPS and SPGF…QPEP. The segment covering 241–265 has biased composition (basic and acidic residues); it reads KGADRKQKTDREKMEKRTPQEKEKY. Positions 291-300 are enriched in polar residues; sequence SPGFNSSHNS.

This sequence belongs to the grh/CP2 family. CP2 subfamily. As to quaternary structure, component of the SSP (stage selector protein) complex, which appears to be a heteromer of TFCP2 and 2 copies of NFE4.

It is found in the nucleus. May function as a transcription factor. The polypeptide is Transcription factor CP2 (tfcp2) (Xenopus laevis (African clawed frog)).